A 261-amino-acid chain; its full sequence is Cell division protein DivIB (261 aa).

The Cytoplasmic segment spans residues 1 to 27 (MEKGKVVVLEDRVPKLKERRRQKANRR). Residues 28–48 (LIAYLSFFFLFILCVLYFQSP) form a helical membrane-spanning segment. The tract at residues 47 to 117 (SPLGAVGHVE…PNTIAIHVRE (71 aa)) is alpha. Over 49-261 (LGAVGHVEVS…KEDGDETTSP (213 aa)) the chain is Extracellular. The POTRA domain occupies 50–118 (GAVGHVEVSG…NTIAIHVREW (69 aa)). The interval 118-230 (WRRIAYVYDR…YPAIAAALDR (113 aa)) is beta. Residues 231–260 (NVKGVIHLEVGSYFVPYSPPKKEDGDETTS) form a gamma region.

Belongs to the FtsQ/DivIB family. DivIB subfamily.

The protein localises to the cell membrane. Its function is as follows. Cell division protein that may be involved in stabilizing or promoting the assembly of the division complex. The chain is Cell division protein DivIB from Geobacillus kaustophilus (strain HTA426).